The following is a 78-amino-acid chain: Acyl carrier protein (78 aa).

The Carrier domain occupies 2–77; sequence STIEESVKAI…AAIDFIQASQ (76 aa). An O-(pantetheine 4'-phosphoryl)serine modification is found at Ser37.

The protein belongs to the acyl carrier protein (ACP) family. In terms of processing, 4'-phosphopantetheine is transferred from CoA to a specific serine of apo-ACP by AcpS. This modification is essential for activity because fatty acids are bound in thioester linkage to the sulfhydryl of the prosthetic group.

The protein localises to the cytoplasm. Its pathway is lipid metabolism; fatty acid biosynthesis. Its function is as follows. Carrier of the growing fatty acid chain in fatty acid biosynthesis. The protein is Acyl carrier protein of Sodalis glossinidius (strain morsitans).